Reading from the N-terminus, the 258-residue chain is Acyl-[acyl-carrier-protein]--UDP-N-acetylglucosamine O-acyltransferase (258 aa).

This sequence belongs to the transferase hexapeptide repeat family. LpxA subfamily. As to quaternary structure, homotrimer.

The protein localises to the cytoplasm. The catalysed reaction is a (3R)-hydroxyacyl-[ACP] + UDP-N-acetyl-alpha-D-glucosamine = a UDP-3-O-[(3R)-3-hydroxyacyl]-N-acetyl-alpha-D-glucosamine + holo-[ACP]. It participates in glycolipid biosynthesis; lipid IV(A) biosynthesis; lipid IV(A) from (3R)-3-hydroxytetradecanoyl-[acyl-carrier-protein] and UDP-N-acetyl-alpha-D-glucosamine: step 1/6. In terms of biological role, involved in the biosynthesis of lipid A, a phosphorylated glycolipid that anchors the lipopolysaccharide to the outer membrane of the cell. This is Acyl-[acyl-carrier-protein]--UDP-N-acetylglucosamine O-acyltransferase from Pseudomonas syringae pv. syringae (strain B728a).